Reading from the N-terminus, the 98-residue chain is Co-chaperonin GroES (98 aa).

The protein belongs to the GroES chaperonin family. Heptamer of 7 subunits arranged in a ring. Interacts with the chaperonin GroEL.

It is found in the cytoplasm. Functionally, together with the chaperonin GroEL, plays an essential role in assisting protein folding. The GroEL-GroES system forms a nano-cage that allows encapsulation of the non-native substrate proteins and provides a physical environment optimized to promote and accelerate protein folding. GroES binds to the apical surface of the GroEL ring, thereby capping the opening of the GroEL channel. This Corynebacterium diphtheriae (strain ATCC 700971 / NCTC 13129 / Biotype gravis) protein is Co-chaperonin GroES.